A 120-amino-acid chain; its full sequence is Large ribosomal subunit protein uL22 (120 aa).

The disordered stretch occupies residues 1-20 (MFVNRRYTARGKNLPSSPKK).

The protein belongs to the universal ribosomal protein uL22 family. In terms of assembly, part of the 50S ribosomal subunit.

This protein binds specifically to 23S rRNA; its binding is stimulated by other ribosomal proteins, e.g. L4, L17, and L20. It is important during the early stages of 50S assembly. It makes multiple contacts with different domains of the 23S rRNA in the assembled 50S subunit and ribosome. In terms of biological role, the globular domain of the protein is located near the polypeptide exit tunnel on the outside of the subunit, while an extended beta-hairpin is found that lines the wall of the exit tunnel in the center of the 70S ribosome. The polypeptide is Large ribosomal subunit protein uL22 (Borrelia hermsii (strain HS1 / DAH)).